The following is a 364-amino-acid chain: Dihydroorotate dehydrogenase (quinone) (364 aa).

FMN-binding positions include alanine 62–lysine 66 and threonine 86. Lysine 66 provides a ligand contact to substrate. Asparagine 111 to phenylalanine 115 is a substrate binding site. 2 residues coordinate FMN: asparagine 142 and asparagine 175. Asparagine 175 serves as a coordination point for substrate. Serine 178 (nucleophile) is an active-site residue. Asparagine 180 provides a ligand contact to substrate. Lysine 216 and threonine 244 together coordinate FMN. Residue asparagine 245 to threonine 246 coordinates substrate. FMN is bound by residues glycine 267, glycine 296, and tyrosine 317–threonine 318.

Belongs to the dihydroorotate dehydrogenase family. Type 2 subfamily. Monomer. FMN serves as cofactor.

Its subcellular location is the cell membrane. The catalysed reaction is (S)-dihydroorotate + a quinone = orotate + a quinol. The protein operates within pyrimidine metabolism; UMP biosynthesis via de novo pathway; orotate from (S)-dihydroorotate (quinone route): step 1/1. Functionally, catalyzes the conversion of dihydroorotate to orotate with quinone as electron acceptor. The chain is Dihydroorotate dehydrogenase (quinone) from Anaeromyxobacter dehalogenans (strain 2CP-C).